Here is a 536-residue protein sequence, read N- to C-terminus: CBS domain-containing protein CBSCBSPB2 (536 aa).

A compositionally biased stretch (low complexity) spans 1–23 (MTTTPTSSGRRSISSIRRTSSAS). Residues 1 to 60 (MTTTPTSSGRRSISSIRRTSSASKKPVLQSEESESGSGSINENTSKPDSPLAQPVSDGER) are disordered. CBS domains are found at residues 66–124 (RLSK…LRPE), 132–187 (MTRN…RMEK), 228–287 (VTEN…LSPE), and 295–354 (MTPN…NNSS). The 84-residue stretch at 406–489 (VSSFAFKFED…KVLRLHLDFT (84 aa)) folds into the PB1 domain. The chain crosses the membrane as a helical span at residues 509 to 529 (VWWQTGVLAGAIVLTSIGLFV).

The protein resides in the membrane. The polypeptide is CBS domain-containing protein CBSCBSPB2 (CBSCBSPB2) (Arabidopsis thaliana (Mouse-ear cress)).